The chain runs to 136 residues: Histone H3.3 (136 aa).

Residues 1 to 41 (MARTKQTARKSTGGKAPRKQLASKAARKSAPVTGGVKKPHR) are disordered. K5 is subject to N6,N6,N6-trimethyllysine; alternate. K5 carries the post-translational modification N6,N6-dimethyllysine; alternate. N6-methyllysine; alternate is present on residues K5 and K10. K10 carries the N6-acetyllysine; alternate modification. Phosphoserine is present on S11. The residue at position 15 (K15) is an N6,N6-dimethyllysine; alternate. N6-acetyllysine; alternate occurs at positions 15, 19, 24, 28, and 37. N6-methyllysine; alternate occurs at positions 19, 24, 28, and 37. 2 positions are modified to N6,N6,N6-trimethyllysine; alternate: K28 and K37. 2 positions are modified to N6,N6-dimethyllysine; alternate: K28 and K37. 2 positions are modified to N6-acetyllysine: K57 and K65. Residue K80 is modified to N6,N6,N6-trimethyllysine; alternate. K80 carries the N6,N6-dimethyllysine; alternate modification. K80 is subject to N6-methyllysine; alternate.

Belongs to the histone H3 family. In terms of assembly, the nucleosome is a histone octamer containing two molecules each of H2A, H2B, H3 and H4 assembled in one H3-H4 heterotetramer and two H2A-H2B heterodimers. The octamer wraps approximately 147 bp of DNA. Post-translationally, phosphorylated to form H3S10ph. H3S10ph promotes subsequent H3K14ac formation and is required for transcriptional activation through TBP recruitment to the promoters. In terms of processing, mono-, di- and trimethylated by the COMPASS complex to form H3K4me1/2/3. H3K4me activates gene expression by regulating transcription elongation and plays a role in telomere length maintenance. H3K4me enrichment correlates with transcription levels, and occurs in a 5' to 3' gradient with H3K4me3 enrichment at the 5'-end of genes, shifting to H3K4me2 and then H3K4me1. Methylated by SET2 to form H3K36me. H3K36me represses gene expression. Methylated by DOT1 to form H3K79me. H3K79me is required for association of SIR proteins with telomeric regions and for telomeric silencing. The COMPASS-mediated formation of H3K4me2/3 and the DOT1-mediated formation of H3K79me require H2BK123ub1. Acetylation of histone H3 leads to transcriptional activation. H3K14ac formation by GCN5 is promoted by H3S10ph. H3K14ac can also be formed by ESA1. H3K56ac formation occurs predominantly in newly synthesized H3 molecules during G1, S and G2/M of the cell cycle and may be involved in DNA repair.

The protein localises to the nucleus. It is found in the chromosome. Its function is as follows. Core component of nucleosome. Nucleosomes wrap and compact DNA into chromatin, limiting DNA accessibility to the cellular machineries which require DNA as a template. Histones thereby play a central role in transcription regulation, DNA repair, DNA replication and chromosomal stability. DNA accessibility is regulated via a complex set of post-translational modifications of histones, also called histone code, and nucleosome remodeling. In Meyerozyma guilliermondii (strain ATCC 6260 / CBS 566 / DSM 6381 / JCM 1539 / NBRC 10279 / NRRL Y-324) (Yeast), this protein is Histone H3.3 (HHT3).